The primary structure comprises 169 residues: MPLLDSFTVDHTRMQAPAVRVAKQMRTPHGDPITVFDLRFCVPNQEILPERGIHTLEHLFAGFMRDHLNGSDVEIIDISPMGCRTGFYMCLIGTPDEARVAAAWSAAMEDVLKVVDQAKIPELNEYQCGTYQMHSLEEAHEIARAILAHGVGVNKNAELALPSDKLASL.

Positions 54, 58, and 128 each coordinate Fe cation.

This sequence belongs to the LuxS family. As to quaternary structure, homodimer. Fe cation is required as a cofactor.

The enzyme catalyses S-(5-deoxy-D-ribos-5-yl)-L-homocysteine = (S)-4,5-dihydroxypentane-2,3-dione + L-homocysteine. Functionally, involved in the synthesis of autoinducer 2 (AI-2) which is secreted by bacteria and is used to communicate both the cell density and the metabolic potential of the environment. The regulation of gene expression in response to changes in cell density is called quorum sensing. Catalyzes the transformation of S-ribosylhomocysteine (RHC) to homocysteine (HC) and 4,5-dihydroxy-2,3-pentadione (DPD). In Tolumonas auensis (strain DSM 9187 / NBRC 110442 / TA 4), this protein is S-ribosylhomocysteine lyase.